The following is a 602-amino-acid chain: Elongation factor 4 (602 aa).

Positions 5 to 187 (DHIRNFAIIA…QIIVSLPAPE (183 aa)) constitute a tr-type G domain. Residues 17-22 (DHGKST) and 134-137 (NKVD) each bind GTP.

The protein belongs to the TRAFAC class translation factor GTPase superfamily. Classic translation factor GTPase family. LepA subfamily.

It is found in the cell inner membrane. It carries out the reaction GTP + H2O = GDP + phosphate + H(+). In terms of biological role, required for accurate and efficient protein synthesis under certain stress conditions. May act as a fidelity factor of the translation reaction, by catalyzing a one-codon backward translocation of tRNAs on improperly translocated ribosomes. Back-translocation proceeds from a post-translocation (POST) complex to a pre-translocation (PRE) complex, thus giving elongation factor G a second chance to translocate the tRNAs correctly. Binds to ribosomes in a GTP-dependent manner. The chain is Elongation factor 4 from Pelagibacter ubique (strain HTCC1062).